The following is a 115-amino-acid chain: Succinate dehydrogenase assembly factor 3, mitochondrial (115 aa).

This sequence belongs to the complex I LYR family. SDHAF3 subfamily. As to quaternary structure, interacts with sdh2 within an sdh1-sdh2 subcomplex.

The protein localises to the mitochondrion matrix. In terms of biological role, plays an essential role in the assembly of succinate dehydrogenase (SDH), an enzyme complex (also referred to as respiratory complex II) that is a component of both the tricarboxylic acid (TCA) cycle and the mitochondrial electron transport chain, and which couples the oxidation of succinate to fumarate with the reduction of ubiquinone (coenzyme Q) to ubiquinol. Promotes maturation of the iron-sulfur protein subunit sdh2 of the SDH catalytic dimer, protecting it from the deleterious effects of oxidants. May act together with SDHAF1. This Schizosaccharomyces pombe (strain 972 / ATCC 24843) (Fission yeast) protein is Succinate dehydrogenase assembly factor 3, mitochondrial.